Consider the following 168-residue polypeptide: Protein GrpE (168 aa).

This sequence belongs to the GrpE family. As to quaternary structure, homodimer.

The protein localises to the cytoplasm. Its function is as follows. Participates actively in the response to hyperosmotic and heat shock by preventing the aggregation of stress-denatured proteins, in association with DnaK and GrpE. It is the nucleotide exchange factor for DnaK and may function as a thermosensor. Unfolded proteins bind initially to DnaJ; upon interaction with the DnaJ-bound protein, DnaK hydrolyzes its bound ATP, resulting in the formation of a stable complex. GrpE releases ADP from DnaK; ATP binding to DnaK triggers the release of the substrate protein, thus completing the reaction cycle. Several rounds of ATP-dependent interactions between DnaJ, DnaK and GrpE are required for fully efficient folding. The chain is Protein GrpE from Thermotoga neapolitana (strain ATCC 49049 / DSM 4359 / NBRC 107923 / NS-E).